The following is a 415-amino-acid chain: Diaminopimelate decarboxylase (415 aa).

Lys54 carries the post-translational modification N6-(pyridoxal phosphate)lysine. Pyridoxal 5'-phosphate is bound by residues Gly223 and 264–267 (EPGR). Substrate contacts are provided by Arg267, Arg303, and Tyr307. The active-site Proton donor is Cys338. The substrate site is built by Glu339 and Tyr374. Residue Tyr374 participates in pyridoxal 5'-phosphate binding.

It belongs to the Orn/Lys/Arg decarboxylase class-II family. LysA subfamily. As to quaternary structure, homodimer. It depends on pyridoxal 5'-phosphate as a cofactor.

It catalyses the reaction meso-2,6-diaminopimelate + H(+) = L-lysine + CO2. The protein operates within amino-acid biosynthesis; L-lysine biosynthesis via DAP pathway; L-lysine from DL-2,6-diaminopimelate: step 1/1. Specifically catalyzes the decarboxylation of meso-diaminopimelate (meso-DAP) to L-lysine. In Buchnera aphidicola subsp. Schizaphis graminum (strain Sg), this protein is Diaminopimelate decarboxylase.